A 232-amino-acid chain; its full sequence is Acetate--CoA ligase [ADP-forming] I subunit beta (232 aa).

Positions 27 to 63 (KEILKLYGIPVPEFKVARNEEEAVKFSGEIGYPVVMK) constitute an ATP-grasp domain. 53-64 (SGEIGYPVVMKI) contacts ATP.

It belongs to the acetate CoA ligase beta subunit family. Heterotetramer of two alpha and two beta subunits.

It localises to the cytoplasm. The enzyme catalyses acetate + ATP + CoA = acetyl-CoA + ADP + phosphate. Its activity is regulated as follows. Activity is dependent on magnesium. In terms of biological role, catalyzes the reversible formation of acetate and ATP from acetyl-CoA by using ADP and phosphate. Can use other substrates such as isobutyryl-CoA, propionyl-CoA and butyryl-CoA, but not indoleacetyl-CoA, phenylacetyl-CoA or succinyl-CoA. Seems to be involved primarily in the conversion of acetyl-CoA to acetate. Participates in the degradation of branched-chain amino acids via branched-chain-acyl-CoA esters. This is Acetate--CoA ligase [ADP-forming] I subunit beta from Pyrococcus furiosus (strain ATCC 43587 / DSM 3638 / JCM 8422 / Vc1).